Here is a 69-residue protein sequence, read N- to C-terminus: Putative membrane protein insertion efficiency factor (69 aa).

This sequence belongs to the UPF0161 family.

The protein localises to the cell inner membrane. Functionally, could be involved in insertion of integral membrane proteins into the membrane. The protein is Putative membrane protein insertion efficiency factor of Nitrosomonas eutropha (strain DSM 101675 / C91 / Nm57).